A 365-amino-acid chain; its full sequence is Chorismate synthase (365 aa).

Residues 41–60 (MQHDLDRRRPGTSRYTTARR) are disordered. 2 residues coordinate NADP(+): arginine 48 and arginine 54. FMN is bound by residues 125-127 (RSS), 238-239 (NA), glycine 278, 293-297 (KPTSS), and arginine 319.

Belongs to the chorismate synthase family. In terms of assembly, homotetramer. Requires FMNH2 as cofactor.

It carries out the reaction 5-O-(1-carboxyvinyl)-3-phosphoshikimate = chorismate + phosphate. It functions in the pathway metabolic intermediate biosynthesis; chorismate biosynthesis; chorismate from D-erythrose 4-phosphate and phosphoenolpyruvate: step 7/7. Functionally, catalyzes the anti-1,4-elimination of the C-3 phosphate and the C-6 proR hydrogen from 5-enolpyruvylshikimate-3-phosphate (EPSP) to yield chorismate, which is the branch point compound that serves as the starting substrate for the three terminal pathways of aromatic amino acid biosynthesis. This reaction introduces a second double bond into the aromatic ring system. The protein is Chorismate synthase of Shewanella amazonensis (strain ATCC BAA-1098 / SB2B).